Here is a 489-residue protein sequence, read N- to C-terminus: MFS-type transporter MFS19 (489 aa).

Residues 1–12 are compositionally biased toward basic and acidic residues; sequence MAHSTAGDRDPE. A disordered region spans residues 1–42; sequence MAHSTAGDRDPEVGSEQHSSIAQLHTESMSDPWGDSNSPENP. Residues 16-41 are compositionally biased toward polar residues; it reads EQHSSIAQLHTESMSDPWGDSNSPEN. The helical transmembrane segment at 52 to 72 threads the bilayer; the sequence is FHVAIVSIFTLTANLAATMFA. Asn-83 and Asn-86 each carry an N-linked (GlcNAc...) asparagine glycan. The next 11 helical transmembrane spans lie at 91–111, 127–147, 149–169, 180–200, 208–228, 282–302, 321–341, 361–381, 388–408, 425–445, and 454–474; these read AMTV…LAPL, VYIA…FLVF, FLCG…VADI, ALFA…GGYV, WTFR…MFFM, PIVL…FLLF, GLAY…FSIL, LILM…YGWS, WIVP…VVIP, ALAA…LVAA, and GWGN…PWLF.

This sequence belongs to the major facilitator superfamily.

Its subcellular location is the cell membrane. MFS-type efflux pump involved in the modulation susceptibility to various compounds including cumyl hydroperoxide, potassium superoxide, many singlet oxygen-generating compounds (eosin Y, rose Bengal, hematoporphyrin, methylene blue, and cercosporin), and the cell wall biosynthesis inhibitor Congo red. Involved in oxidative stress tolerance, colonization, and lesion formation. The sequence is that of MFS-type transporter MFS19 from Alternaria alternata (Alternaria rot fungus).